The primary structure comprises 1169 residues: Translation initiation factor IF-2 (1169 aa).

Disordered regions lie at residues 69 to 108 (IKAKNENPKNNDNKNNKNFSNPSHPEKLSKEGLNKKPLLI) and 139 to 568 (ALSK…LRAA). Basic and acidic residues-rich tracts occupy residues 71–83 (AKNENPKNNDNKN) and 92–102 (HPEKLSKEGLN). The segment covering 139–156 (ALSKNQNKTNTSVITTPN) has biased composition (polar residues). Basic and acidic residues predominate over residues 157-171 (LKDKKNPSALQDKKP). Residues 196-214 (NLANSNRNINANKINNSVN) show a composition bias toward low complexity. Residues 231 to 248 (ADNNNFPKKNLNSPNVKS) show a composition bias toward polar residues. The segment covering 265 to 281 (NTNRPNSNSRQPSSNTQ) has biased composition (low complexity). Polar residues-rich tracts occupy residues 282–294 (ISANRPGGQNRQG), 412–432 (MQLQKTNASNKEKPNISNVNK), and 439–455 (NQKTKAPNSRLNTSPSP). Over residues 472-486 (GRTDWDDSAKLEALR) the composition is skewed to basic and acidic residues. The span at 544–560 (KQFKKKKKETTRQRQKR) shows a compositional bias: basic residues. The region spanning 661 to 838 (KRPPVITVMG…EVEDLQANPE (178 aa)) is the tr-type G domain. The segment at 670–677 (GHVDHGKT) is G1. GTP is bound at residue 670–677 (GHVDHGKT). A G2 region spans residues 695–699 (GITQH). The tract at residues 720–723 (DTPG) is G3. GTP-binding positions include 720 to 724 (DTPGH) and 774 to 777 (NKID). The interval 774-777 (NKID) is G4. Positions 810 to 812 (SAI) are G5.

Belongs to the TRAFAC class translation factor GTPase superfamily. Classic translation factor GTPase family. IF-2 subfamily.

The protein localises to the cytoplasm. Functionally, one of the essential components for the initiation of protein synthesis. Protects formylmethionyl-tRNA from spontaneous hydrolysis and promotes its binding to the 30S ribosomal subunits. Also involved in the hydrolysis of GTP during the formation of the 70S ribosomal complex. In Prochlorococcus marinus subsp. pastoris (strain CCMP1986 / NIES-2087 / MED4), this protein is Translation initiation factor IF-2.